The sequence spans 224 residues: Serum amyloid P-component (224 aa).

Positions 1-19 (MERLLLWVSVLASLPEAFA) are cleaved as a signal peptide. Residues 24–224 (TGKVFVFPRE…YVVIKPRVWS (201 aa)) form the Pentraxin (PTX) domain. The N-linked (GlcNAc...) asparagine glycan is linked to Asn-51. Cys-55 and Cys-114 are disulfide-bonded. Residues Asp-77, Asn-78, Glu-155, Gln-156, Asp-157, and Gln-167 each contribute to the Ca(2+) site.

Belongs to the pentraxin family. As to quaternary structure, homopentamer. Pentraxin (or pentaxin) have a discoid arrangement of 5 non-covalently bound subunits. The cofactor is Ca(2+).

The protein resides in the secreted. In Sus scrofa (Pig), this protein is Serum amyloid P-component (APCS).